A 281-amino-acid polypeptide reads, in one-letter code: MGKLGAYVEISRPKNALMSILGTLTGWVNSTSVYDGRLILACLIPPLVLMAGNAINDYYDAEIDAINKPYRPIPSGRISKREALNIYIALSLFGIALSIFLGFIEFLIVTAFSLSWYAYARWLKRTGVPGNALVSLGVAFTLIFGSLAAGNLTNKVIIFSSVAFTSNLIREFVKAVEDLPGDRAHGVRTIAVRIGVKRTGILVFLLSLATVVLTILPVIFRLTGIIYLSLSVIISLPILMLASAICLKGKLEERARETSSLIKVSMFLGLLGMLLDPFRVV.

The next 5 membrane-spanning stretches (helical) occupy residues 88–108 (IALS…EFLI), 132–152 (ALVS…AGNL), 200–220 (GILV…PVIF), 225–245 (IIYL…ASAI), and 261–281 (LIKV…FRVV).

This sequence belongs to the UbiA prenyltransferase family. DGGGP synthase subfamily. Mg(2+) is required as a cofactor.

The protein resides in the cell membrane. The enzyme catalyses sn-3-O-(geranylgeranyl)glycerol 1-phosphate + (2E,6E,10E)-geranylgeranyl diphosphate = 2,3-bis-O-(geranylgeranyl)-sn-glycerol 1-phosphate + diphosphate. It participates in membrane lipid metabolism; glycerophospholipid metabolism. In terms of biological role, prenyltransferase that catalyzes the transfer of the geranylgeranyl moiety of geranylgeranyl diphosphate (GGPP) to the C2 hydroxyl of (S)-3-O-geranylgeranylglyceryl phosphate (GGGP). This reaction is the second ether-bond-formation step in the biosynthesis of archaeal membrane lipids. The protein is Digeranylgeranylglyceryl phosphate synthase of Korarchaeum cryptofilum (strain OPF8).